The sequence spans 104 residues: NADH-quinone oxidoreductase subunit K (104 aa).

3 helical membrane passes run 7–27 (LSHY…GIFL), 33–53 (IVIL…LVSF), and 67–87 (LLVL…LVVF).

This sequence belongs to the complex I subunit 4L family. NDH-1 is composed of 14 different subunits. Subunits NuoA, H, J, K, L, M, N constitute the membrane sector of the complex.

It localises to the cell inner membrane. It catalyses the reaction a quinone + NADH + 5 H(+)(in) = a quinol + NAD(+) + 4 H(+)(out). Its function is as follows. NDH-1 shuttles electrons from NADH, via FMN and iron-sulfur (Fe-S) centers, to quinones in the respiratory chain. The immediate electron acceptor for the enzyme in this species is believed to be ubiquinone. Couples the redox reaction to proton translocation (for every two electrons transferred, four hydrogen ions are translocated across the cytoplasmic membrane), and thus conserves the redox energy in a proton gradient. This Xanthobacter autotrophicus (strain ATCC BAA-1158 / Py2) protein is NADH-quinone oxidoreductase subunit K.